The primary structure comprises 422 residues: Proton-gated ion channel subunit pbo-6 (422 aa).

The first 20 residues, 1 to 20 (MQCSFLTIFIFITTVTVGVA), serve as a signal peptide directing secretion. Residues 21-233 (EFSEQYQGSS…IKVARKPFYY (213 aa)) lie on the Extracellular side of the membrane. Cys-151 and Cys-165 are disulfide-bonded. Helical transmembrane passes span 234 to 254 (LISLVVPSYIICVLSIAGLFA), 268 to 288 (LGVTAILSMAVLSLVVTEKVP), and 294 to 314 (VPLLIVYMHFIIVMVTIATIL). Residues 315–378 (TSTVMRVHAK…GEVSRRMDYL (64 aa)) are Cytoplasmic-facing. The helical transmembrane segment at 379–399 (LASVFIIIISTPTLYLFYMCF) threads the bilayer.

It belongs to the ligand-gated ion channel (TC 1.A.9) family. Acetylcholine receptor (TC 1.A.9.1) subfamily. In terms of assembly, the functional channel is a hetero-oligomer of pbo-5 and pbo-6. In terms of tissue distribution, expressed in the posterior body muscles.

The protein localises to the membrane. Forms a proton-gated ion channel with pbo-5 that is activated by acidification of the posterior coelomic space, leading to posterior body wall muscle contraction (pBoc) during the defecation cycle. Not necessary for stimulation of posterior body contraction (pBoc). Does not bind neurotransmitters such as acetylcholine, gamma-aminobutyric acid, glycine, serotonin, glutamate or choline. This chain is Proton-gated ion channel subunit pbo-6, found in Caenorhabditis elegans.